The sequence spans 415 residues: Serine hydroxymethyltransferase (415 aa).

(6S)-5,6,7,8-tetrahydrofolate-binding positions include Leu117 and 121 to 123 (GHL). Lys226 carries the post-translational modification N6-(pyridoxal phosphate)lysine. (6S)-5,6,7,8-tetrahydrofolate contacts are provided by residues Glu241 and 349 to 351 (SPF).

It belongs to the SHMT family. Homodimer. Requires pyridoxal 5'-phosphate as cofactor.

The protein resides in the cytoplasm. The enzyme catalyses (6R)-5,10-methylene-5,6,7,8-tetrahydrofolate + glycine + H2O = (6S)-5,6,7,8-tetrahydrofolate + L-serine. Its pathway is one-carbon metabolism; tetrahydrofolate interconversion. It functions in the pathway amino-acid biosynthesis; glycine biosynthesis; glycine from L-serine: step 1/1. Its function is as follows. Catalyzes the reversible interconversion of serine and glycine with tetrahydrofolate (THF) serving as the one-carbon carrier. This reaction serves as the major source of one-carbon groups required for the biosynthesis of purines, thymidylate, methionine, and other important biomolecules. Also exhibits THF-independent aldolase activity toward beta-hydroxyamino acids, producing glycine and aldehydes, via a retro-aldol mechanism. The sequence is that of Serine hydroxymethyltransferase from Geotalea daltonii (strain DSM 22248 / JCM 15807 / FRC-32) (Geobacter daltonii).